A 277-amino-acid chain; its full sequence is Large ribosomal subunit protein uL2 (277 aa).

Residues 225–277 are disordered; sequence MNPIDHPHGGGEGKTAAGRHPVSPWGTPSKGFRTRVNKRTDGMIVRRRYSNKG.

This sequence belongs to the universal ribosomal protein uL2 family. Part of the 50S ribosomal subunit. Forms a bridge to the 30S subunit in the 70S ribosome.

Its function is as follows. One of the primary rRNA binding proteins. Required for association of the 30S and 50S subunits to form the 70S ribosome, for tRNA binding and peptide bond formation. It has been suggested to have peptidyltransferase activity; this is somewhat controversial. Makes several contacts with the 16S rRNA in the 70S ribosome. The polypeptide is Large ribosomal subunit protein uL2 (Nitrosospira multiformis (strain ATCC 25196 / NCIMB 11849 / C 71)).